A 345-amino-acid polypeptide reads, in one-letter code: UDP-3-O-acylglucosamine N-acyltransferase (345 aa).

The active-site Proton acceptor is His-248.

The protein belongs to the transferase hexapeptide repeat family. LpxD subfamily. As to quaternary structure, homotrimer.

The catalysed reaction is a UDP-3-O-[(3R)-3-hydroxyacyl]-alpha-D-glucosamine + a (3R)-hydroxyacyl-[ACP] = a UDP-2-N,3-O-bis[(3R)-3-hydroxyacyl]-alpha-D-glucosamine + holo-[ACP] + H(+). It functions in the pathway bacterial outer membrane biogenesis; LPS lipid A biosynthesis. In terms of biological role, catalyzes the N-acylation of UDP-3-O-acylglucosamine using 3-hydroxyacyl-ACP as the acyl donor. Is involved in the biosynthesis of lipid A, a phosphorylated glycolipid that anchors the lipopolysaccharide to the outer membrane of the cell. The sequence is that of UDP-3-O-acylglucosamine N-acyltransferase from Trichodesmium erythraeum (strain IMS101).